A 165-amino-acid polypeptide reads, in one-letter code: Putative pre-16S rRNA nuclease (165 aa).

This sequence belongs to the YqgF nuclease family.

It localises to the cytoplasm. In terms of biological role, could be a nuclease involved in processing of the 5'-end of pre-16S rRNA. The sequence is that of Putative pre-16S rRNA nuclease from Rhizobium meliloti (strain 1021) (Ensifer meliloti).